Consider the following 87-residue polypeptide: UPF0367 protein SynWH7803_2240 (87 aa).

This sequence belongs to the UPF0367 family.

This Synechococcus sp. (strain WH7803) protein is UPF0367 protein SynWH7803_2240.